Here is a 582-residue protein sequence, read N- to C-terminus: Enhancer of polycomb-like protein 1 (582 aa).

Positions 238–295 (RDAQSADKLRRLRKELEDARQLVALVRQRELARKEMLSMERQIFLQRSEVKEMKRKLN) form a coiled coil. The segment at 323–351 (PEQPKKKPAEAPAAQRPTAPQIRMPQKPG) is disordered. A coiled-coil region spans residues 352-385 (TQAADDMQLLEDVQAEKENEILRDIKQNIAKHIK). Low complexity predominate over residues 539–555 (AQAHAQAQAQKRLQAEQ). Residues 539-582 (AQAHAQAQAQKRLQAEQTTTNNGPPNIGHTMGSNPGPGAVASTS) are disordered.

Belongs to the enhancer of polycomb family. Component of the NuA4 histone acetyltransferase complex.

Its subcellular location is the nucleus. Its function is as follows. Component of the NuA4 histone acetyltransferase complex which is involved in transcriptional activation of selected genes principally by acetylation of nucleosomal histone H4 and H2A. The NuA4 complex is also involved in DNA repair. Involved in gene silencing by neighboring heterochromatin, blockage of the silencing spreading along the chromosome, and required for cell cycle progression through G2/M. The polypeptide is Enhancer of polycomb-like protein 1 (epl1) (Aspergillus fumigatus (strain ATCC MYA-4609 / CBS 101355 / FGSC A1100 / Af293) (Neosartorya fumigata)).